Consider the following 1098-residue polypeptide: Unconventional myosin-If (1098 aa).

The Myosin motor domain maps to 17–690 (SGVDDMVLLP…SLFLLEEVRE (674 aa)). Residue 110-117 (GESGAGKT) participates in ATP binding. The actin-binding stretch occupies residues 579 to 589 (PHYIRCIKPNE). Residues 693–722 (FDGFARTIQKAWRRHVAVRKYEEMREEASN) form the IQ domain. The region spanning 728–917 (KERRRNSINR…GRTLTVSVGD (190 aa)) is the TH1 domain. 2 disordered regions span residues 913 to 1009 (VSVG…EFLN) and 1021 to 1044 (KRSV…THGP). Residues 924 to 937 (KPTRKGMAKGKPRR) are compositionally biased toward basic residues. Phosphoserine is present on Ser1023. The 58-residue stretch at 1041 to 1098 (THGPRCRALYQYVGQDVDELSFNVNEVIEILMEDPSGWWKGRLHGQEGLFPGNYVEKI) folds into the SH3 domain.

Belongs to the TRAFAC class myosin-kinesin ATPase superfamily. Myosin family.

In terms of biological role, myosins are actin-based motor molecules with ATPase activity. Unconventional myosins serve in intracellular movements. Their highly divergent tails are presumed to bind to membranous compartments, which would be moved relative to actin filaments. In Homo sapiens (Human), this protein is Unconventional myosin-If (MYO1F).